We begin with the raw amino-acid sequence, 740 residues long: MFGLSVNHAYAGPGIFINDGTDDGCIWTFDKEDYSPIGDYFGNTAPADKDSAGRNSPASVKYHIPSIQQLGGAATLKCLSKDRDTQTDRVLFYGNSKEQGSISLTLGGELFVNNGNLGLGGGTDTKAMRIGSMATLTGPSGLRSLAIGAGEIATVASGDDAIAIGTAAQAAHVGSIALGLQSTTELPSLVKDVTINGIKLSAFAGSNPASVLSIGNDTLKRSITNVGAGRVSKDSTDAVNGRQLFAVSEQAASGWSLTVNGMDKSRVGPGDTVDLSNSDGNLVLSKKGKDVTFNLASDLKVTSLVAGNTFLDTNGLVITGGPSMTVSGIDAGQLKISHVADGAVTVTSTDAVNGSQLHRVAHTIAEHLGGDAHVNADGSVIGPQYTVQKKRYKTIYDAFGGVDENLANINDILHDIESGGGIKYFHANSIGADSRALGTNSIAVGSDSVASGEGSISVGNGAQASAHGSVALGENAAAPDANSVALGAGSKTSEVVATKGTTINGQYYDFAGDAPSGTVSVGDKGAERTITNVAAGRISVESTDAVNGSQLNAVNQAIENLAAGVTENDKFSVKYDRHSDGTKKNSMTLQGWDSATPVVLANVADGVHKNDAVNVSQLKAGLSTTLGEAKAYTDQTALQTLDQANAYTDKKFGKLNEDIVATRIEARQAAAIGLAAASLRYDDRPGKISAAIGGGFWRGEGAVALGLGHTSEDQRMRSNLSAATSGGNWGMGAGFSYTFN.

The signal sequence occupies residues 1–11 (MFGLSVNHAYA). The surface exposed passenger domain stretch occupies residues 12–647 (GPGIFINDGT…LQTLDQANAY (636 aa)). An outer membrane translocation of the passenger domain region spans residues 648 to 686 (TDKKFGKLNEDIVATRIEARQAAAIGLAAASLRYDDRPG). Beta stranded transmembrane passes span 686 to 696 (GKISAAIGGGF), 700 to 710 (EGAVALGLGHT), 719 to 725 (NLSAATS), and 728 to 739 (NWGMGAGFSYTF). Positions 687–740 (KISAAIGGGFWRGEGAVALGLGHTSEDQRMRSNLSAATSGGNWGMGAGFSYTFN) are translocator domain.

Belongs to the autotransporter-2 (AT-2) (TC 1.B.40) family. Homotrimer.

It is found in the cell surface. Its subcellular location is the cell outer membrane. In terms of biological role, binds to hyaluronic acid and epithelial cells, and is required for full virulence in the mouse model. The polypeptide is Autotransporter adhesin BtaE (Brucella suis biovar 1 (strain 1330)).